Reading from the N-terminus, the 359-residue chain is Hsp70-binding protein 1 (359 aa).

The interval 1–71 (MSDEGSRGSR…PPPEPMSEER (71 aa)) is disordered. Positions 23–37 (SSGGGGGGSSAGGSG) are enriched in gly residues. ARM repeat units lie at residues 132 to 174 (ENMD…TCSQ), 177 to 217 (AAIQ…CLVR), 220 to 259 (EAGL…NLLV), and 262 to 301 (PEHK…SLVT). A phosphoserine mark is found at serine 351 and serine 356.

In terms of assembly, interacts with the ATP-binding domain of HSPA1A. Detected in a ternary complex containing STUB1, HSPA1A and HSPBP1. Interacts with PGLYRP1; this interaction blocks the cytotoxic activity of the PGLYRP1-HSPA1A complex. In terms of tissue distribution, ubiquitous.

In terms of biological role, inhibits HSPA1A chaperone activity by changing the conformation of the ATP-binding domain of HSPA1A and interfering with ATP binding. Interferes with ubiquitination mediated by STUB1 and inhibits chaperone-assisted degradation of immature CFTR. The protein is Hsp70-binding protein 1 of Homo sapiens (Human).